We begin with the raw amino-acid sequence, 154 residues long: Style cell-cycle inhibitor 1-A (154 aa).

2 stretches are compositionally biased toward basic and acidic residues: residues 1 to 11 and 24 to 48; these read MGSDKKTPEEK and DEVK…DKSK. The tract at residues 1 to 84 is disordered; the sequence is MGSDKKTPEE…DKSKNKFEEL (84 aa). Residues 63-77 are compositionally biased toward basic residues; the sequence is GEKHKTKSHKHKDKS.

Specifically expressed in flowers pistils, especially in stigmas and styles. Barely detected in roots, stems, leaves, sepals, petals and stamen.

The protein localises to the nucleus. In terms of biological role, component of the auxin signaling transduction pathway that regulates cell proliferation and differentiation during flowers stigmas and styles development. Involved in the regulation of auxin-related genes. The protein is Style cell-cycle inhibitor 1-A of Nicotiana tabacum (Common tobacco).